A 163-amino-acid chain; its full sequence is Crossover junction endodeoxyribonuclease RuvC (163 aa).

Catalysis depends on residues Asp-4, Glu-65, and Asp-138. Mg(2+) contacts are provided by Asp-4, Glu-65, and Asp-138.

The protein belongs to the RuvC family. As to quaternary structure, homodimer which binds Holliday junction (HJ) DNA. The HJ becomes 2-fold symmetrical on binding to RuvC with unstacked arms; it has a different conformation from HJ DNA in complex with RuvA. In the full resolvosome a probable DNA-RuvA(4)-RuvB(12)-RuvC(2) complex forms which resolves the HJ. It depends on Mg(2+) as a cofactor.

The protein localises to the cytoplasm. The enzyme catalyses Endonucleolytic cleavage at a junction such as a reciprocal single-stranded crossover between two homologous DNA duplexes (Holliday junction).. In terms of biological role, the RuvA-RuvB-RuvC complex processes Holliday junction (HJ) DNA during genetic recombination and DNA repair. Endonuclease that resolves HJ intermediates. Cleaves cruciform DNA by making single-stranded nicks across the HJ at symmetrical positions within the homologous arms, yielding a 5'-phosphate and a 3'-hydroxyl group; requires a central core of homology in the junction. The consensus cleavage sequence is 5'-(A/T)TT(C/G)-3'. Cleavage occurs on the 3'-side of the TT dinucleotide at the point of strand exchange. HJ branch migration catalyzed by RuvA-RuvB allows RuvC to scan DNA until it finds its consensus sequence, where it cleaves and resolves the cruciform DNA. The polypeptide is Crossover junction endodeoxyribonuclease RuvC (Corynebacterium jeikeium (strain K411)).